The chain runs to 329 residues: MASQLTDAFARKFYYLRLSITDVCNFRCTYCLPDGYKPSGVTNKGFLTVDEIRRVTRAFASLGTEKVRLTGGEPSLRRDFTDIIAAVRENDAIRQIAVTTNGYRLERDVANWRDAGLTGINVSVDSLDARQFQAITGQDKFNQVMAGIDAAFEAGFEKVKVNTVLMRDVNHHQLDTFLNWIQHRPIQLRFIELMETGEGSELFRKHHISGQVLRDELLRRGWIHQLRQRSDGPAQVFCHPDYAGEIGLIMPYEKDFCATCNRLRVSSIGKLHLCLFGEGGVNLRDLLEDDTQQQALEARISAALREKKQTHFLHQNNTGITQNLSYIGG.

The Radical SAM core domain maps to 8–234 (AFARKFYYLR…QLRQRSDGPA (227 aa)). A GTP-binding site is contributed by arginine 17. [4Fe-4S] cluster contacts are provided by cysteine 24 and cysteine 28. Residue tyrosine 30 participates in S-adenosyl-L-methionine binding. Cysteine 31 contacts [4Fe-4S] cluster. Arginine 68 serves as a coordination point for GTP. Glycine 72 lines the S-adenosyl-L-methionine pocket. Threonine 99 is a binding site for GTP. Serine 123 is a binding site for S-adenosyl-L-methionine. Lysine 160 contacts GTP. Methionine 194 provides a ligand contact to S-adenosyl-L-methionine. 2 residues coordinate [4Fe-4S] cluster: cysteine 257 and cysteine 260. Position 262–264 (262–264 (RLR)) interacts with GTP. Cysteine 274 provides a ligand contact to [4Fe-4S] cluster.

Belongs to the radical SAM superfamily. MoaA family. In terms of assembly, monomer and homodimer. The cofactor is [4Fe-4S] cluster.

It catalyses the reaction GTP + AH2 + S-adenosyl-L-methionine = (8S)-3',8-cyclo-7,8-dihydroguanosine 5'-triphosphate + 5'-deoxyadenosine + L-methionine + A + H(+). It participates in cofactor biosynthesis; molybdopterin biosynthesis. Functionally, catalyzes the cyclization of GTP to (8S)-3',8-cyclo-7,8-dihydroguanosine 5'-triphosphate. This is GTP 3',8-cyclase from Escherichia fergusonii (strain ATCC 35469 / DSM 13698 / CCUG 18766 / IAM 14443 / JCM 21226 / LMG 7866 / NBRC 102419 / NCTC 12128 / CDC 0568-73).